The following is a 512-amino-acid chain: DNA damage-binding protein CMR1 (512 aa).

The interval 32 to 96 (SQIKREAGVE…IPNVNDNQLL (65 aa)) is disordered. Residues 34–46 (IKREAGVEDEHLD) show a composition bias toward basic and acidic residues. Residues 47 to 60 (RKRKKKAGSAKKAV) are compositionally biased toward basic residues. 7 WD repeats span residues 189–230 (LTAE…PEDE), 241–281 (LFTK…SEEI), 289–329 (DDPL…TEIN), 333–373 (LSDK…NKPE), 390–429 (DSRL…PEDL), 442–481 (GRWT…LAHL), and 482–512 (PTAT…FLFT).

It belongs to the WD repeat DDB2/WDR76 family.

In terms of biological role, DNA-binding protein that binds to both single- and double-stranded DNA. Binds preferentially to UV-damaged DNA. May be involved in DNA-metabolic processes. The chain is DNA damage-binding protein CMR1 from Kluyveromyces lactis (strain ATCC 8585 / CBS 2359 / DSM 70799 / NBRC 1267 / NRRL Y-1140 / WM37) (Yeast).